A 468-amino-acid chain; its full sequence is Sorting and assembly machinery component 50 homolog B (468 aa).

A disordered region spans residues 1–25 (MGTVHARSLDPLPMNGPDFGSPDDA). In terms of domain architecture, POTRA spans 44–124 (VVVQRVHFEG…LDVTFEVTEL (81 aa)).

Belongs to the SAM50/omp85 family. Associates with the mitochondrial contact site and cristae organizing system (MICOS) complex (also known as MINOS or MitOS complex).

Its subcellular location is the mitochondrion outer membrane. May play a role in the maintenance of the structure of mitochondrial cristae. This Xenopus laevis (African clawed frog) protein is Sorting and assembly machinery component 50 homolog B (samm50-b).